Reading from the N-terminus, the 736-residue chain is Subtilisin-like protease SBT4.11 (736 aa).

A signal peptide spans 1 to 25 (MAKRGAFSSFHSFLIVLLFLNSVLA). A propeptide spans 26 to 113 (VTHGHQDKQV…VFPNKKLKLQ (88 aa)) (activation peptide). One can recognise an Inhibitor I9 domain in the interval 35 to 112 (VYIVYMGSLP…SVFPNKKLKL (78 aa)). The 463-residue stretch at 117–579 (SWDFMGLKEG…AGHVDPIAAT (463 aa)) folds into the Peptidase S8 domain. Catalysis depends on Asp145, which acts as the Charge relay system. A glycan (N-linked (GlcNAc...) asparagine) is linked at Asn176. His200 serves as the catalytic Charge relay system. Residues Asn215 and Asn223 are each glycosylated (N-linked (GlcNAc...) asparagine). Residues 355–437 (KFPLVYGKSA…GLQKDDFESV (83 aa)) enclose the PA domain. Ser518 functions as the Charge relay system in the catalytic mechanism. Residues Asn555, Asn602, Asn638, Asn646, and Asn656 are each glycosylated (N-linked (GlcNAc...) asparagine).

The protein belongs to the peptidase S8 family. Post-translationally, the C-terminal propeptide is autocleaved.

The protein localises to the secreted. The chain is Subtilisin-like protease SBT4.11 from Arabidopsis thaliana (Mouse-ear cress).